The primary structure comprises 268 residues: Orotidine 5'-phosphate decarboxylase (268 aa).

Substrate contacts are provided by residues aspartate 38, 60-62, 92-101, tyrosine 218, and arginine 236; these read KTH and DRKFADIGNT. The Proton donor role is filled by lysine 94.

It belongs to the OMP decarboxylase family.

The catalysed reaction is orotidine 5'-phosphate + H(+) = UMP + CO2. The protein operates within pyrimidine metabolism; UMP biosynthesis via de novo pathway; UMP from orotate: step 2/2. The polypeptide is Orotidine 5'-phosphate decarboxylase (URA3) (Candida parapsilosis (Yeast)).